Here is a 692-residue protein sequence, read N- to C-terminus: Elongation factor G (692 aa).

A tr-type G domain is found at 8–282 (ENTRNIGIMA…AVIDYLPSPL (275 aa)). Residues 17–24 (AHIDAGKT), 81–85 (DTPGH), and 135–138 (NKMD) contribute to the GTP site.

This sequence belongs to the TRAFAC class translation factor GTPase superfamily. Classic translation factor GTPase family. EF-G/EF-2 subfamily.

The protein resides in the cytoplasm. Functionally, catalyzes the GTP-dependent ribosomal translocation step during translation elongation. During this step, the ribosome changes from the pre-translocational (PRE) to the post-translocational (POST) state as the newly formed A-site-bound peptidyl-tRNA and P-site-bound deacylated tRNA move to the P and E sites, respectively. Catalyzes the coordinated movement of the two tRNA molecules, the mRNA and conformational changes in the ribosome. This chain is Elongation factor G, found in Bacillus cereus (strain ATCC 10987 / NRS 248).